The following is a 213-amino-acid chain: Protein FAM156A/FAM156B (213 aa).

Met1 carries the N-acetylmethionine modification. The interval 1 to 62 (MDPLQKRNPA…SQAVPLPEGL (62 aa)) is disordered. Over residues 8 to 37 (NPASPSKSSPMTAAETSQEGPAPSQPSYSE) the composition is skewed to polar residues. Ser114 is subject to Phosphoserine. Residues 154–170 (WETLVQGLSGLTLSLGT) form a helical membrane-spanning segment. The tract at residues 165–198 (TLSLGTNQPGPLPEAALQPQETEEKRQRERQQES) is disordered. Over residues 186 to 197 (TEEKRQRERQQE) the composition is skewed to basic and acidic residues.

Its subcellular location is the membrane. This chain is Protein FAM156A/FAM156B (FAM156A), found in Homo sapiens (Human).